A 323-amino-acid chain; its full sequence is Phospho-N-acetylmuramoyl-pentapeptide-transferase (323 aa).

A run of 9 helical transmembrane segments spans residues 3–23 (NILLPLLGGFIITAAFMPALI), 52–72 (MGGLLFIVAIAVMTLLTSWVL), 77–97 (MLPTTWILIFILVLYGALGMW), 121–141 (IVGALILFWVYTHEQLPMALH), 145–165 (IGNWHMSGWYAVFVILWLVGF), 175–195 (LDGLVSGLASIAFAAYGIVAW), 200–220 (INIAIFCFAVVGSLLGFLIFN), 226–248 (IFMGDTGSLALGGALAAVSILLH), and 301–321 (IDLTFWGIGLVTALSGVWVIL).

Belongs to the glycosyltransferase 4 family. MraY subfamily. Mg(2+) is required as a cofactor.

The protein resides in the cell membrane. It carries out the reaction UDP-N-acetyl-alpha-D-muramoyl-L-alanyl-gamma-D-glutamyl-L-lysyl-D-alanyl-D-alanine + di-trans,octa-cis-undecaprenyl phosphate = Mur2Ac(oyl-L-Ala-gamma-D-Glu-L-Lys-D-Ala-D-Ala)-di-trans,octa-cis-undecaprenyl diphosphate + UMP. It participates in cell wall biogenesis; peptidoglycan biosynthesis. Its function is as follows. Catalyzes the initial step of the lipid cycle reactions in the biosynthesis of the cell wall peptidoglycan: transfers peptidoglycan precursor phospho-MurNAc-pentapeptide from UDP-MurNAc-pentapeptide onto the lipid carrier undecaprenyl phosphate, yielding undecaprenyl-pyrophosphoryl-MurNAc-pentapeptide, known as lipid I. This chain is Phospho-N-acetylmuramoyl-pentapeptide-transferase, found in Levilactobacillus brevis (strain ATCC 367 / BCRC 12310 / CIP 105137 / JCM 1170 / LMG 11437 / NCIMB 947 / NCTC 947) (Lactobacillus brevis).